A 240-amino-acid chain; its full sequence is Ribose-5-phosphate isomerase A (240 aa).

The segment at 1-23 (MKTSGGSDAAKRRAGESAAETVT) is disordered. Substrate-binding positions include 32-35 (TGST), 92-95 (DGAD), and 111-114 (KGGG). Glutamate 120 serves as the catalytic Proton acceptor. Position 138 (lysine 138) interacts with substrate.

It belongs to the ribose 5-phosphate isomerase family. Homodimer.

The catalysed reaction is aldehydo-D-ribose 5-phosphate = D-ribulose 5-phosphate. It functions in the pathway carbohydrate degradation; pentose phosphate pathway; D-ribose 5-phosphate from D-ribulose 5-phosphate (non-oxidative stage): step 1/1. Its function is as follows. Catalyzes the reversible conversion of ribose-5-phosphate to ribulose 5-phosphate. In Halorubrum lacusprofundi (strain ATCC 49239 / DSM 5036 / JCM 8891 / ACAM 34), this protein is Ribose-5-phosphate isomerase A.